A 282-amino-acid chain; its full sequence is Pantothenate synthetase (282 aa).

Position 30–37 (30–37) interacts with ATP; that stretch reads MGNLHEGH. The active-site Proton donor is the histidine 37. Glutamine 61 is a (R)-pantoate binding site. Glutamine 61 provides a ligand contact to beta-alanine. 149-152 lines the ATP pocket; that stretch reads GEKD. Glutamine 155 contributes to the (R)-pantoate binding site. ATP is bound by residues valine 178 and 186–189; that span reads KSSR.

It belongs to the pantothenate synthetase family. As to quaternary structure, homodimer.

The protein resides in the cytoplasm. The enzyme catalyses (R)-pantoate + beta-alanine + ATP = (R)-pantothenate + AMP + diphosphate + H(+). It functions in the pathway cofactor biosynthesis; (R)-pantothenate biosynthesis; (R)-pantothenate from (R)-pantoate and beta-alanine: step 1/1. Functionally, catalyzes the condensation of pantoate with beta-alanine in an ATP-dependent reaction via a pantoyl-adenylate intermediate. The chain is Pantothenate synthetase from Marinobacter nauticus (strain ATCC 700491 / DSM 11845 / VT8) (Marinobacter aquaeolei).